The chain runs to 550 residues: Beta-cubebene synthase (550 aa).

4 residues coordinate Mg(2+): aspartate 303, aspartate 307, aspartate 447, and glutamate 455. The short motif at 303–307 (DDTYD) is the DDXXD motif element.

The protein belongs to the terpene synthase family. Tpsa subfamily. Requires Mg(2+) as cofactor. In terms of tissue distribution, expressed in young developing leaves and in stamens. Not detected in tepals and carpels.

It catalyses the reaction (2E,6E)-farnesyl diphosphate = beta-cubebene + diphosphate. The protein operates within secondary metabolite biosynthesis; terpenoid biosynthesis. In terms of biological role, sesquiterpene synthase converting farnesyl diphosphate into beta-cubebene (24.5%), alpha-muurolene (19.3%), delta-cadinol (18.6%), delta-elemene (16.0%), tau-muurolene (10.8%), and beta-elemene (10.8%). No activity with geranyl diphosphate or geranylgeranyl diphosphate. In Magnolia grandiflora (Southern magnolia), this protein is Beta-cubebene synthase.